We begin with the raw amino-acid sequence, 293 residues long: Ribosomal protein L11 methyltransferase (293 aa).

Residues Thr145, Gly166, Asp188, and Asn230 each coordinate S-adenosyl-L-methionine.

This sequence belongs to the methyltransferase superfamily. PrmA family.

It localises to the cytoplasm. It catalyses the reaction L-lysyl-[protein] + 3 S-adenosyl-L-methionine = N(6),N(6),N(6)-trimethyl-L-lysyl-[protein] + 3 S-adenosyl-L-homocysteine + 3 H(+). Functionally, methylates ribosomal protein L11. This Shewanella baltica (strain OS185) protein is Ribosomal protein L11 methyltransferase.